Reading from the N-terminus, the 391-residue chain is 3-ketoacyl-CoA thiolase (391 aa).

Residue Cys95 is the Acyl-thioester intermediate of the active site. Active-site proton acceptor residues include His347 and Cys377.

The protein belongs to the thiolase-like superfamily. Thiolase family. As to quaternary structure, heterotetramer of two alpha chains (FadB) and two beta chains (FadA).

Its subcellular location is the cytoplasm. It carries out the reaction an acyl-CoA + acetyl-CoA = a 3-oxoacyl-CoA + CoA. It participates in lipid metabolism; fatty acid beta-oxidation. In terms of biological role, catalyzes the final step of fatty acid oxidation in which acetyl-CoA is released and the CoA ester of a fatty acid two carbons shorter is formed. The chain is 3-ketoacyl-CoA thiolase from Pseudomonas putida (strain ATCC 47054 / DSM 6125 / CFBP 8728 / NCIMB 11950 / KT2440).